The primary structure comprises 746 residues: Chitin biosynthesis protein CHS6 (746 aa).

Residues M1–S25 form a disordered region. Residues L734–P746 are CHS5-binding.

Belongs to the CHAPS family. In terms of assembly, component of the CHS5/6 complex composed of the 4 CHAPS proteins BCH1, BCH2, BUD7, and CHS6 as well as at least CHS5 and GTP-bound ARF1. The complex interacts with the cargo protein CHS3.

The protein resides in the golgi apparatus. It localises to the trans-Golgi network membrane. Member of the CHS5-ARF1P-binding proteins (CHAPS) which mediates export of specific cargo proteins, including chitin synthase CHS3. The chain is Chitin biosynthesis protein CHS6 (CHS6) from Saccharomyces cerevisiae (strain ATCC 204508 / S288c) (Baker's yeast).